The chain runs to 140 residues: MTPLERITQLVNINGDVNNPDTPRPLLSLEDFFIDNNIHGSICCNVIPEQSPQAIYHHFLKIRERNNVSDVLVEITMFDDPDWPFSESILVITTASPEEVQSWFVEEIAPDECWEGWSEDTEHGWVEVPVGMHPVTCWWD.

This is an uncharacterized protein from Escherichia coli (strain K12).